The chain runs to 382 residues: Galactokinase (382 aa).

34–37 (EHTD) is a substrate binding site. An ATP-binding site is contributed by 124–130 (GAGLSSS). The Mg(2+) site is built by Ser130 and Glu162. Residue Asp174 is the Proton acceptor of the active site. Tyr223 provides a ligand contact to substrate.

Belongs to the GHMP kinase family. GalK subfamily.

The protein resides in the cytoplasm. The catalysed reaction is alpha-D-galactose + ATP = alpha-D-galactose 1-phosphate + ADP + H(+). Its pathway is carbohydrate metabolism; galactose metabolism. Functionally, catalyzes the transfer of the gamma-phosphate of ATP to D-galactose to form alpha-D-galactose-1-phosphate (Gal-1-P). This Salmonella agona (strain SL483) protein is Galactokinase.